We begin with the raw amino-acid sequence, 212 residues long: Putative aryl-alcohol dehydrogenase AAD6 (212 aa).

Residue Y76 is the Proton donor of the active site.

This sequence belongs to the aldo/keto reductase family. Aldo/keto reductase 2 subfamily.

The polypeptide is Putative aryl-alcohol dehydrogenase AAD6 (Saccharomyces cerevisiae (strain ATCC 204508 / S288c) (Baker's yeast)).